A 646-amino-acid chain; its full sequence is Microtubule-associated protein 9 (646 aa).

Serine 2 bears the N-acetylserine mark. A Phosphotyrosine modification is found at tyrosine 12. 6 disordered regions span residues aspartate 75–glutamate 226, serine 242–aspartate 418, arginine 491–alanine 511, arginine 531–aspartate 554, leucine 570–glutamine 597, and lysine 609–phenylalanine 646. Composition is skewed to polar residues over residues alanine 105–aspartate 119 and arginine 157–glycine 167. Basic and acidic residues predominate over residues serine 188–isoleucine 204. Composition is skewed to polar residues over residues serine 205–leucine 222, leucine 280–leucine 291, and proline 330–threonine 340. Residues glutamate 346 to threonine 357 show a composition bias toward basic and acidic residues. Residues threonine 386–tyrosine 398 show a composition bias toward polar residues. Over residues leucine 405–aspartate 418 the composition is skewed to basic and acidic residues. A coiled-coil region spans residues methionine 442–lysine 596. The segment covering proline 637–phenylalanine 646 has biased composition (polar residues).

In terms of assembly, binds to purified microtubules via its C-terminus.

It is found in the cytoplasm. The protein resides in the cytoskeleton. Its subcellular location is the spindle. In terms of biological role, involved in organization of the bipolar mitotic spindle. Required for bipolar spindle assembly, mitosis progression and cytokinesis. May act by stabilizing interphase microtubules. The protein is Microtubule-associated protein 9 (Map9) of Mus musculus (Mouse).